The chain runs to 371 residues: Lysine racemase (371 aa).

Lysine 39 acts as the Proton acceptor in catalysis. Position 39 is an N6-(pyridoxal phosphate)lysine (lysine 39). Arginine 135 lines the substrate pocket. Catalysis depends on tyrosine 266, which acts as the Proton acceptor. Methionine 313 lines the substrate pocket.

The protein belongs to the alanine racemase family. Homodimer. It depends on pyridoxal 5'-phosphate as a cofactor.

It catalyses the reaction L-lysine = D-lysine. Catalyzes the interconversion of D-lysine and L-lysine. Can also use arginine and ornithine, but not alanine. The protein is Lysine racemase of Oenococcus oeni (strain ATCC BAA-331 / PSU-1).